The primary structure comprises 194 residues: FMN-dependent NADH:quinone oxidoreductase (194 aa).

FMN is bound by residues Ser-10 and 90 to 93 (MYNL).

This sequence belongs to the azoreductase type 1 family. Homodimer. It depends on FMN as a cofactor.

The enzyme catalyses 2 a quinone + NADH + H(+) = 2 a 1,4-benzosemiquinone + NAD(+). It carries out the reaction N,N-dimethyl-1,4-phenylenediamine + anthranilate + 2 NAD(+) = 2-(4-dimethylaminophenyl)diazenylbenzoate + 2 NADH + 2 H(+). Its function is as follows. Quinone reductase that provides resistance to thiol-specific stress caused by electrophilic quinones. Functionally, also exhibits azoreductase activity. Catalyzes the reductive cleavage of the azo bond in aromatic azo compounds to the corresponding amines. The protein is FMN-dependent NADH:quinone oxidoreductase of Haemophilus influenzae (strain PittEE).